We begin with the raw amino-acid sequence, 50 residues long: Photosystem II reaction center protein M (50 aa).

The helical transmembrane segment at 7–27 (GFVASLLFVGVPTIFLIGLFI) threads the bilayer.

This sequence belongs to the PsbM family. PSII is composed of 1 copy each of membrane proteins PsbA, PsbB, PsbC, PsbD, PsbE, PsbF, PsbH, PsbI, PsbJ, PsbK, PsbL, PsbM, PsbT, PsbX, PsbY, Psb30/Ycf12, peripheral proteins PsbO, CyanoQ (PsbQ), PsbU, PsbV and a large number of cofactors. It forms dimeric complexes.

It localises to the cellular thylakoid membrane. One of the components of the core complex of photosystem II (PSII). PSII is a light-driven water:plastoquinone oxidoreductase that uses light energy to abstract electrons from H(2)O, generating O(2) and a proton gradient subsequently used for ATP formation. It consists of a core antenna complex that captures photons, and an electron transfer chain that converts photonic excitation into a charge separation. This subunit is found at the monomer-monomer interface. The sequence is that of Photosystem II reaction center protein M from Prochlorococcus marinus (strain MIT 9515).